A 320-amino-acid polypeptide reads, in one-letter code: tRNA N6-adenosine threonylcarbamoyltransferase (320 aa).

Residues histidine 114 and histidine 118 each coordinate Fe cation. Residues 136-140 (VVSGG), aspartate 169, glycine 182, aspartate 186, and asparagine 273 each bind substrate. Residue aspartate 297 coordinates Fe cation.

The protein belongs to the KAE1 / TsaD family. Fe(2+) serves as cofactor.

The protein localises to the cytoplasm. It catalyses the reaction L-threonylcarbamoyladenylate + adenosine(37) in tRNA = N(6)-L-threonylcarbamoyladenosine(37) in tRNA + AMP + H(+). Functionally, required for the formation of a threonylcarbamoyl group on adenosine at position 37 (t(6)A37) in tRNAs that read codons beginning with adenine. Is involved in the transfer of the threonylcarbamoyl moiety of threonylcarbamoyl-AMP (TC-AMP) to the N6 group of A37, together with TsaE and TsaB. TsaD likely plays a direct catalytic role in this reaction. The polypeptide is tRNA N6-adenosine threonylcarbamoyltransferase (Ureaplasma parvum serovar 3 (strain ATCC 27815 / 27 / NCTC 11736)).